The sequence spans 212 residues: Leucyl/phenylalanyl-tRNA--protein transferase (212 aa).

Belongs to the L/F-transferase family.

The protein resides in the cytoplasm. The catalysed reaction is N-terminal L-lysyl-[protein] + L-leucyl-tRNA(Leu) = N-terminal L-leucyl-L-lysyl-[protein] + tRNA(Leu) + H(+). It carries out the reaction N-terminal L-arginyl-[protein] + L-leucyl-tRNA(Leu) = N-terminal L-leucyl-L-arginyl-[protein] + tRNA(Leu) + H(+). The enzyme catalyses L-phenylalanyl-tRNA(Phe) + an N-terminal L-alpha-aminoacyl-[protein] = an N-terminal L-phenylalanyl-L-alpha-aminoacyl-[protein] + tRNA(Phe). Functions in the N-end rule pathway of protein degradation where it conjugates Leu, Phe and, less efficiently, Met from aminoacyl-tRNAs to the N-termini of proteins containing an N-terminal arginine or lysine. The sequence is that of Leucyl/phenylalanyl-tRNA--protein transferase from Flavobacterium johnsoniae (strain ATCC 17061 / DSM 2064 / JCM 8514 / BCRC 14874 / CCUG 350202 / NBRC 14942 / NCIMB 11054 / UW101) (Cytophaga johnsonae).